Here is a 624-residue protein sequence, read N- to C-terminus: (-)-beta-phellandrene synthase 2, chloroplastic (624 aa).

The N-terminal 47 residues, 1–47 (MALVSVAPLVSMRRSLFSSPYELKSIDKTIPNLVMCRKRMLGRPSIR), are a transit peptide targeting the chloroplast. Mg(2+) contacts are provided by Asp375, Asp379, and Asp527. Residues 375–379 (DDIYD) carry the DDXXD motif motif.

This sequence belongs to the terpene synthase family. Tpsd subfamily. The cofactor is Mg(2+). Mn(2+) serves as cofactor.

It localises to the plastid. The protein resides in the chloroplast. It catalyses the reaction (2E)-geranyl diphosphate = (-)-beta-phellandrene + diphosphate. It participates in terpene metabolism; oleoresin biosynthesis. It functions in the pathway secondary metabolite biosynthesis; terpenoid biosynthesis. Its function is as follows. Monoterpene synthase (TPS) involved in the biosynthesis of monoterpene natural products included in conifer oleoresin secretions and volatile emissions; these compounds contribute to biotic and abiotic stress defense against herbivores and pathogens. Catalyzes the conversion of (2E)-geranyl diphosphate (GPP) to (-)-beta-phellandrene. The protein is (-)-beta-phellandrene synthase 2, chloroplastic of Pinus contorta (Shore pine).